The following is a 143-amino-acid chain: Mini-ribonuclease 3 (143 aa).

Residue Asp-23 is part of the active site.

This sequence belongs to the MrnC RNase family. As to quaternary structure, homodimer. Mg(2+) serves as cofactor.

The protein localises to the cytoplasm. Involved in correct processing of both the 5' and 3' ends of 23S rRNA precursor. Processes 30S rRNA precursor transcript even in absence of ribonuclease 3 (Rnc); Rnc processes 30S rRNA into smaller rRNA precursors. Cleaves more efficiently on assembled 50S ribosomal subunits. Cleavage is strongly stimulated by ribosomal protein L3 (RplC); 20-30% DMSO can replace RplC, suggesting RplC may alter rRNA conformation. In Bacillus subtilis (strain 168), this protein is Mini-ribonuclease 3 (mrnC).